Reading from the N-terminus, the 231-residue chain is Dephospho-CoA kinase domain-containing protein (231 aa).

Residues L3–L207 enclose the DPCK domain. Position 8–15 (G8–S15) interacts with ATP.

The protein belongs to the CoaE family.

The polypeptide is Dephospho-CoA kinase domain-containing protein (Dcakd) (Mus musculus (Mouse)).